Reading from the N-terminus, the 119-residue chain is Ribonuclease P protein component (119 aa).

Residues 1 to 24 form a disordered region; sequence MRGSSRFRPHEKLRASDDYQRVKR. Positions 8–21 are enriched in basic and acidic residues; the sequence is RPHEKLRASDDYQR.

This sequence belongs to the RnpA family. As to quaternary structure, consists of a catalytic RNA component (M1 or rnpB) and a protein subunit.

It carries out the reaction Endonucleolytic cleavage of RNA, removing 5'-extranucleotides from tRNA precursor.. RNaseP catalyzes the removal of the 5'-leader sequence from pre-tRNA to produce the mature 5'-terminus. It can also cleave other RNA substrates such as 4.5S RNA. The protein component plays an auxiliary but essential role in vivo by binding to the 5'-leader sequence and broadening the substrate specificity of the ribozyme. The polypeptide is Ribonuclease P protein component (Syntrophobacter fumaroxidans (strain DSM 10017 / MPOB)).